Consider the following 484-residue polypeptide: Glutamate--tRNA ligase (484 aa).

A 'HIGH' region motif is present at residues 11-21 (PSPTGYLHIGN). A 'KMSKS' region motif is present at residues 252–256 (KLSKR). Lys-255 serves as a coordination point for ATP.

It belongs to the class-I aminoacyl-tRNA synthetase family. Glutamate--tRNA ligase type 1 subfamily. In terms of assembly, monomer.

The protein resides in the cytoplasm. The enzyme catalyses tRNA(Glu) + L-glutamate + ATP = L-glutamyl-tRNA(Glu) + AMP + diphosphate. Functionally, catalyzes the attachment of glutamate to tRNA(Glu) in a two-step reaction: glutamate is first activated by ATP to form Glu-AMP and then transferred to the acceptor end of tRNA(Glu). This is Glutamate--tRNA ligase from Staphylococcus saprophyticus subsp. saprophyticus (strain ATCC 15305 / DSM 20229 / NCIMB 8711 / NCTC 7292 / S-41).